Here is a 490-residue protein sequence, read N- to C-terminus: Probable cytosol aminopeptidase (490 aa).

Mn(2+) contacts are provided by Lys-256 and Asp-261. Residue Lys-268 is part of the active site. The Mn(2+) site is built by Asp-280, Asp-340, and Glu-342. Arg-344 is an active-site residue.

Belongs to the peptidase M17 family. Requires Mn(2+) as cofactor.

It is found in the cytoplasm. It carries out the reaction Release of an N-terminal amino acid, Xaa-|-Yaa-, in which Xaa is preferably Leu, but may be other amino acids including Pro although not Arg or Lys, and Yaa may be Pro. Amino acid amides and methyl esters are also readily hydrolyzed, but rates on arylamides are exceedingly low.. It catalyses the reaction Release of an N-terminal amino acid, preferentially leucine, but not glutamic or aspartic acids.. Presumably involved in the processing and regular turnover of intracellular proteins. Catalyzes the removal of unsubstituted N-terminal amino acids from various peptides. This is Probable cytosol aminopeptidase from Synechococcus sp. (strain CC9902).